We begin with the raw amino-acid sequence, 353 residues long: tRNA N6-adenosine threonylcarbamoyltransferase (353 aa).

Histidine 109 and histidine 113 together coordinate Fe cation. Residues threonine 136–glycine 140, aspartate 169, glycine 182, aspartate 186, and asparagine 284 contribute to the substrate site. Aspartate 312 lines the Fe cation pocket.

The protein belongs to the KAE1 / TsaD family. The cofactor is Fe(2+).

It localises to the cytoplasm. The catalysed reaction is L-threonylcarbamoyladenylate + adenosine(37) in tRNA = N(6)-L-threonylcarbamoyladenosine(37) in tRNA + AMP + H(+). Functionally, required for the formation of a threonylcarbamoyl group on adenosine at position 37 (t(6)A37) in tRNAs that read codons beginning with adenine. Is involved in the transfer of the threonylcarbamoyl moiety of threonylcarbamoyl-AMP (TC-AMP) to the N6 group of A37, together with TsaE and TsaB. TsaD likely plays a direct catalytic role in this reaction. This chain is tRNA N6-adenosine threonylcarbamoyltransferase, found in Chlorobium phaeobacteroides (strain DSM 266 / SMG 266 / 2430).